The chain runs to 235 residues: Carbohydrate deacetylase (235 aa).

Residues histidine 61 and histidine 124 each coordinate Mg(2+).

The protein belongs to the YdjC deacetylase family. The cofactor is Mg(2+).

In terms of biological role, probably catalyzes the deacetylation of acetylated carbohydrates an important step in the degradation of oligosaccharides. The chain is Carbohydrate deacetylase from Bacillus cereus (strain 03BB102).